A 450-amino-acid chain; its full sequence is tRNA modification GTPase MnmE (450 aa).

(6S)-5-formyl-5,6,7,8-tetrahydrofolate-binding residues include Arg-20, Glu-78, and Lys-117. The TrmE-type G domain maps to 211–372 (GLRMVIVGKP…LEESIYRETQ (162 aa)). Asn-221 is a K(+) binding site. GTP contacts are provided by residues 221–226 (NVGKST), 240–246 (TDIPGTT), 265–268 (DTAG), 326–329 (NKVD), and 353–355 (SAL). Ser-225 provides a ligand contact to Mg(2+). The K(+) site is built by Thr-240, Ile-242, and Thr-245. Thr-246 provides a ligand contact to Mg(2+). A (6S)-5-formyl-5,6,7,8-tetrahydrofolate-binding site is contributed by Lys-450.

This sequence belongs to the TRAFAC class TrmE-Era-EngA-EngB-Septin-like GTPase superfamily. TrmE GTPase family. As to quaternary structure, homodimer. Heterotetramer of two MnmE and two MnmG subunits. The cofactor is K(+).

It is found in the cytoplasm. In terms of biological role, exhibits a very high intrinsic GTPase hydrolysis rate. Involved in the addition of a carboxymethylaminomethyl (cmnm) group at the wobble position (U34) of certain tRNAs, forming tRNA-cmnm(5)s(2)U34. The polypeptide is tRNA modification GTPase MnmE (Thermotoga maritima (strain ATCC 43589 / DSM 3109 / JCM 10099 / NBRC 100826 / MSB8)).